Here is a 345-residue protein sequence, read N- to C-terminus: Transcription initiation factor IIB (345 aa).

A TFIIB-type zinc finger spans residues 20-53 (IVLTCPECKVYPPKIVERFSEGDVVCALCGLVLS). Zn(2+) is bound by residues cysteine 24, cysteine 27, cysteine 45, and cysteine 48. Positions 65–78 (TFSNDDHNGDDPSR) are enriched in basic and acidic residues. The tract at residues 65-93 (TFSNDDHNGDDPSRVGEASNPLLDGNNLS) is disordered. 2 consecutive repeat copies span residues 136–212 (LCDA…IMKN) and 242–318 (FCSH…ILYE).

The protein belongs to the TFIIB family. In terms of assembly, associates with TFIID-IIA (DA complex) to form TFIID-IIA-IIB (DAB-complex) which is then recognized by polymerase II.

The protein resides in the nucleus. General factor that plays a major role in the activation of eukaryotic genes transcribed by RNA polymerase II. In Saccharomyces cerevisiae (strain ATCC 204508 / S288c) (Baker's yeast), this protein is Transcription initiation factor IIB (SUA7).